A 375-amino-acid chain; its full sequence is 23S rRNA (uracil(747)-C(5))-methyltransferase RlmC (375 aa).

[4Fe-4S] cluster is bound by residues C3, C11, C14, and C87. S-adenosyl-L-methionine contacts are provided by Q212, F241, E262, and N307. The Nucleophile role is filled by C334.

The protein belongs to the class I-like SAM-binding methyltransferase superfamily. RNA M5U methyltransferase family. RlmC subfamily.

It carries out the reaction uridine(747) in 23S rRNA + S-adenosyl-L-methionine = 5-methyluridine(747) in 23S rRNA + S-adenosyl-L-homocysteine + H(+). In terms of biological role, catalyzes the formation of 5-methyl-uridine at position 747 (m5U747) in 23S rRNA. This chain is 23S rRNA (uracil(747)-C(5))-methyltransferase RlmC, found in Pectobacterium atrosepticum (strain SCRI 1043 / ATCC BAA-672) (Erwinia carotovora subsp. atroseptica).